Reading from the N-terminus, the 196-residue chain is dITP/XTP pyrophosphatase (196 aa).

Substrate is bound at residue 8–13 (TKNEGK). Mg(2+)-binding residues include E41 and D70. The Proton acceptor role is filled by D70. Residues S71, 153–156 (FGYD), K176, and 181–182 (HR) each bind substrate.

Belongs to the HAM1 NTPase family. Homodimer. Mg(2+) is required as a cofactor.

The catalysed reaction is XTP + H2O = XMP + diphosphate + H(+). It catalyses the reaction dITP + H2O = dIMP + diphosphate + H(+). It carries out the reaction ITP + H2O = IMP + diphosphate + H(+). In terms of biological role, pyrophosphatase that catalyzes the hydrolysis of nucleoside triphosphates to their monophosphate derivatives, with a high preference for the non-canonical purine nucleotides XTP (xanthosine triphosphate), dITP (deoxyinosine triphosphate) and ITP. Seems to function as a house-cleaning enzyme that removes non-canonical purine nucleotides from the nucleotide pool, thus preventing their incorporation into DNA/RNA and avoiding chromosomal lesions. The sequence is that of dITP/XTP pyrophosphatase from Bacillus licheniformis (strain ATCC 14580 / DSM 13 / JCM 2505 / CCUG 7422 / NBRC 12200 / NCIMB 9375 / NCTC 10341 / NRRL NRS-1264 / Gibson 46).